The primary structure comprises 127 residues: Small ribosomal subunit protein eS8 (127 aa).

Belongs to the eukaryotic ribosomal protein eS8 family. Part of the 30S ribosomal subunit.

The sequence is that of Small ribosomal subunit protein eS8 (rps8e) from Pyrococcus abyssi (strain GE5 / Orsay).